Consider the following 209-residue polypeptide: Hyperpolarization-activated voltage-gated potassium channel (209 aa).

At 1–10 (MNLKDRRLKK) the chain is on the cytoplasmic side. A helical transmembrane segment spans residues 11–31 (IMEVLSLIFTFEIVASFILST). At 32-38 (YNPPYQD) the chain is on the extracellular side. The chain crosses the membrane as a helical span at residues 39–59 (LLIKLDYISIMFFTFEFIYNF). Topologically, residues 60-71 (YYVEDKAKFFKD) are cytoplasmic. A helical membrane pass occupies residues 72-92 (IYNIVDAIVVIAFLLYSLQVF). Residues 93-96 (YSKA) are Extracellular-facing. The chain crosses the membrane as a helical; Voltage-sensor span at residues 97 to 117 (FLGLRVINLLRILVLLRIIKL). At 118–125 (RKLEENQA) the chain is on the cytoplasmic side. The chain crosses the membrane as a helical span at residues 126-146 (LINFLTLLTICFIASCLIWIV). Topologically, residues 147–181 (ESGVNPAINNFFDAFYFTTISITTVGYGDITPKTD) are extracellular. Positions 170 to 175 (TVGYGD) match the Selectivity filter motif. The helical transmembrane segment at 182–202 (AGKLIIIFSVLFFISGLITSL) threads the bilayer. The Cytoplasmic segment spans residues 203-209 (QKALKGD).

Belongs to the potassium channel family. Homotetramer.

The protein localises to the cell membrane. Its function is as follows. Voltage-gated potassium-selective channel opened by hyperpolarization. The sequence is that of Hyperpolarization-activated voltage-gated potassium channel (mvp) from Methanocaldococcus jannaschii (strain ATCC 43067 / DSM 2661 / JAL-1 / JCM 10045 / NBRC 100440) (Methanococcus jannaschii).